A 331-amino-acid chain; its full sequence is Cytoskeleton protein RodZ (331 aa).

The Cytoplasmic portion of the chain corresponds to 1–111 (MNTEATQDHQ…LGKRRKKRDG (111 aa)). The region spanning 19–71 (LRHAREQLGLSQQAVAERLCLKVSTVRDIEDDKAPADLASTFLRGYIRSYARL) is the HTH cro/C1-type domain. The segment at residues 30–49 (QQAVAERLCLKVSTVRDIED) is a DNA-binding region (H-T-H motif). A helical; Signal-anchor for type II membrane protein transmembrane segment spans residues 112–132 (WLMSFTWLVLFVVIGLSGAWW). The Periplasmic portion of the chain corresponds to 133–331 (WQDHKAQQEE…TLNAESSPAQ (199 aa)). Over residues 146–166 (MADQSSAELNGGDANSQNVPL) the composition is skewed to polar residues. Positions 146–238 (MADQSSAELN…ASPLPTDQAN (93 aa)) are disordered. Low complexity-rich tracts occupy residues 167–202 (DTSAPAAPTADSAANSAPTDTASAPTTSAPAQTPAD) and 216–234 (TAGTTPAAPATTPASPLPT).

Belongs to the RodZ family.

The protein localises to the cell inner membrane. Functionally, cytoskeletal protein that is involved in cell-shape control through regulation of the length of the long axis. The sequence is that of Cytoskeleton protein RodZ from Klebsiella pneumoniae subsp. pneumoniae (strain ATCC 700721 / MGH 78578).